Reading from the N-terminus, the 275-residue chain is Dermonecrotic toxin LhSicTox-alphaVI1i (275 aa).

His5 is an active-site residue. Residues Glu25 and Asp27 each contribute to the Mg(2+) site. The active-site Nucleophile is His41. 2 disulfide bridges follow: Cys45–Cys51 and Cys47–Cys192. Asp85 contributes to the Mg(2+) binding site.

Belongs to the arthropod phospholipase D family. Class II subfamily. Mg(2+) serves as cofactor. In terms of tissue distribution, expressed by the venom gland.

The protein resides in the secreted. The enzyme catalyses an N-(acyl)-sphingosylphosphocholine = an N-(acyl)-sphingosyl-1,3-cyclic phosphate + choline. The catalysed reaction is an N-(acyl)-sphingosylphosphoethanolamine = an N-(acyl)-sphingosyl-1,3-cyclic phosphate + ethanolamine. It catalyses the reaction a 1-acyl-sn-glycero-3-phosphocholine = a 1-acyl-sn-glycero-2,3-cyclic phosphate + choline. It carries out the reaction a 1-acyl-sn-glycero-3-phosphoethanolamine = a 1-acyl-sn-glycero-2,3-cyclic phosphate + ethanolamine. Dermonecrotic toxins cleave the phosphodiester linkage between the phosphate and headgroup of certain phospholipids (sphingolipid and lysolipid substrates), forming an alcohol (often choline) and a cyclic phosphate. This toxin acts on sphingomyelin (SM). It may also act on ceramide phosphoethanolamine (CPE), lysophosphatidylcholine (LPC) and lysophosphatidylethanolamine (LPE), but not on lysophosphatidylserine (LPS), and lysophosphatidylglycerol (LPG). It acts by transphosphatidylation, releasing exclusively cyclic phosphate products as second products. Induces dermonecrosis, hemolysis, increased vascular permeability, edema, inflammatory response, and platelet aggregation. The chain is Dermonecrotic toxin LhSicTox-alphaVI1i from Loxosceles hirsuta (Recluse spider).